We begin with the raw amino-acid sequence, 463 residues long: tRNA-splicing endonuclease subunit Sen2 (463 aa).

2 positions are modified to phosphoserine: serine 32 and serine 147. The tract at residues 120 to 213 (HDESTVQKIL…VASPSSLNGH (94 aa)) is disordered. Composition is skewed to basic and acidic residues over residues 139-149 (PYRERKGESPQ) and 159-170 (SSLEGREGKDEL). Residues tyrosine 367 and histidine 375 contribute to the active site. A phosphoserine mark is found at serine 406, serine 409, and serine 413. Residue lysine 414 is part of the active site.

It belongs to the tRNA-intron endonuclease family. As to quaternary structure, tRNA splicing endonuclease is a heterotetramer composed of TSEN2, TSEN15, TSEN34/LENG5 and TSEN54. tRNA splicing endonuclease complex also contains proteins of the pre-mRNA 3'-end processing machinery such as CLP1, CPSF1, CPSF4 and CSTF2.

It is found in the nucleus. The protein resides in the nucleolus. It carries out the reaction pretRNA = a 3'-half-tRNA molecule with a 5'-OH end + a 5'-half-tRNA molecule with a 2',3'-cyclic phosphate end + an intron with a 2',3'-cyclic phosphate and a 5'-hydroxyl terminus.. Its function is as follows. Constitutes one of the two catalytic subunit of the tRNA-splicing endonuclease complex, a complex responsible for identification and cleavage of the splice sites in pre-tRNA. It cleaves pre-tRNA at the 5'- and 3'-splice sites to release the intron. The products are an intron and two tRNA half-molecules bearing 2',3'-cyclic phosphate and 5'-OH termini. There are no conserved sequences at the splice sites, but the intron is invariably located at the same site in the gene, placing the splice sites an invariant distance from the constant structural features of the tRNA body. Probably carries the active site for 5'-splice site cleavage. The tRNA splicing endonuclease is also involved in mRNA processing via its association with pre-mRNA 3'-end processing factors, establishing a link between pre-tRNA splicing and pre-mRNA 3'-end formation, suggesting that the endonuclease subunits function in multiple RNA-processing events. In Rattus norvegicus (Rat), this protein is tRNA-splicing endonuclease subunit Sen2 (Tsen2).